We begin with the raw amino-acid sequence, 149 residues long: Nucleoside diphosphate kinase (149 aa).

Residues lysine 9, phenylalanine 57, arginine 85, threonine 91, arginine 102, and asparagine 112 each coordinate ATP. Histidine 115 (pros-phosphohistidine intermediate) is an active-site residue.

The protein belongs to the NDK family. Homotetramer. Requires Mg(2+) as cofactor.

The protein resides in the cytoplasm. It carries out the reaction a 2'-deoxyribonucleoside 5'-diphosphate + ATP = a 2'-deoxyribonucleoside 5'-triphosphate + ADP. It catalyses the reaction a ribonucleoside 5'-diphosphate + ATP = a ribonucleoside 5'-triphosphate + ADP. Functionally, major role in the synthesis of nucleoside triphosphates other than ATP. The ATP gamma phosphate is transferred to the NDP beta phosphate via a ping-pong mechanism, using a phosphorylated active-site intermediate. This is Nucleoside diphosphate kinase from Gloeobacter violaceus (strain ATCC 29082 / PCC 7421).